A 230-amino-acid chain; its full sequence is Cytidylate kinase (230 aa).

12–20 (GPSGAGKGT) is a binding site for ATP.

It belongs to the cytidylate kinase family. Type 1 subfamily.

The protein resides in the cytoplasm. It catalyses the reaction CMP + ATP = CDP + ADP. The catalysed reaction is dCMP + ATP = dCDP + ADP. In Shewanella putrefaciens (strain CN-32 / ATCC BAA-453), this protein is Cytidylate kinase.